A 134-amino-acid chain; its full sequence is Galectin-1 (134 aa).

Ala-1 carries the N-acetylalanine modification. A Galectin domain is found at Gly-4–Glu-134. Residues His-45 to Arg-49, His-53, Asn-62, and Trp-69 to Glu-72 contribute to the a beta-D-galactoside site.

Homodimer.

The protein resides in the secreted. It is found in the extracellular space. It localises to the extracellular matrix. Its function is as follows. May regulate cell apoptosis and cell differentiation. Binds beta-galactoside and a wide array of complex carbohydrates. This chain is Galectin-1, found in Rhinella arenarum (Argentine common toad).